The following is a 312-amino-acid chain: Olfactory receptor 4L1 (312 aa).

At 1 to 25 (MDLKNGSLVTEFILLGFFGRWELQI) the chain is on the extracellular side. A glycan (N-linked (GlcNAc...) asparagine) is linked at asparagine 5. The helical transmembrane segment at 26-49 (FFFVTFSLIYGATVMGNILIMVTV) threads the bilayer. The Cytoplasmic portion of the chain corresponds to 50-57 (TCRSTLHS). A helical transmembrane segment spans residues 58–79 (PLYFLLGNLSFLDMCLSTATTP). The Extracellular segment spans residues 80-100 (KMIIDLLTDHKTISVWGCVTQ). A disulfide bridge links cysteine 97 with cysteine 189. A helical membrane pass occupies residues 101–120 (MFFMHFFGGAEMTLLIIMAF). Over 121-139 (DRYVAICKPLHYRTIMSHK) the chain is Cytoplasmic. A helical membrane pass occupies residues 140-158 (LLKGFAILSWIIGFLHSIS). Topologically, residues 159–195 (QIVLTMNLPFCGHNVINNIFCDLPLVIKLACIETYTL) are extracellular. A helical membrane pass occupies residues 196 to 219 (ELFVIADSGLLSFTCFILLLVSYI). The Cytoplasmic segment spans residues 220 to 235 (VILVSVPKKSSHGLSK). Residues 236 to 258 (ALSTLSAHIIVVTLFFGPCIFIY) traverse the membrane as a helical segment. Residues 259–269 (VWPFSSLASNK) are Extracellular-facing. Residue asparagine 268 is glycosylated (N-linked (GlcNAc...) asparagine). A helical transmembrane segment spans residues 270–289 (TLAVFYTVITPLLNPSIYTL). Residues 290–312 (RNKKMQEAIRKLRFQYVSSAQNF) lie on the Cytoplasmic side of the membrane.

The protein belongs to the G-protein coupled receptor 1 family.

The protein localises to the cell membrane. In terms of biological role, odorant receptor. The chain is Olfactory receptor 4L1 (OR4L1) from Homo sapiens (Human).